We begin with the raw amino-acid sequence, 372 residues long: Segmentation polarity homeobox protein engrailed (372 aa).

4 disordered regions span residues Met-1 to Gln-35, Tyr-47 to Thr-112, Glu-196 to Pro-246, and Asp-261 to Ala-286. 2 stretches are compositionally biased toward basic and acidic residues: residues Asp-79–Arg-105 and Arg-197–Asp-215. A compositionally biased stretch (low complexity) spans Ser-216–Ser-244. Positions Glu-280 to Ser-339 form a DNA-binding region, homeobox.

Belongs to the engrailed homeobox family. In terms of tissue distribution, expressed in the middle silk gland but not in the posterior silk gland during the fourth molt/fifth intermolt period.

The protein localises to the nucleus. Its function is as follows. This protein might be involved in the compartmentalization of the silk gland. The chain is Segmentation polarity homeobox protein engrailed (en) from Bombyx mori (Silk moth).